The chain runs to 380 residues: Alcohol dehydrogenase 1 (380 aa).

Residues C48, T50, H70, C100, C103, C106, C114, and C178 each contribute to the Zn(2+) site. T50 and H70 together coordinate an alcohol. T50 contributes to the NAD(+) binding site. Residues 203-208 (GLGAVG), D227, R232, T273, V296, 296-298 (VGV), and R373 each bind NAD(+).

This sequence belongs to the zinc-containing alcohol dehydrogenase family. In terms of assembly, homodimer. The cofactor is Zn(2+).

It is found in the cytoplasm. It carries out the reaction a primary alcohol + NAD(+) = an aldehyde + NADH + H(+). The enzyme catalyses a secondary alcohol + NAD(+) = a ketone + NADH + H(+). The polypeptide is Alcohol dehydrogenase 1 (ADH1) (Trifolium repens (Creeping white clover)).